The sequence spans 42 residues: YAEGTFISDYSIAMDKIRQQDFVNWLLAQKGKKSDWKHNITQ.

The protein belongs to the glucagon family.

Its subcellular location is the secreted. Potent stimulator of insulin secretion and relatively poor inhibitor of gastric acid secretion. This Sus scrofa (Pig) protein is Gastric inhibitory polypeptide (GIP).